The primary structure comprises 507 residues: Maturase K (507 aa).

It belongs to the intron maturase 2 family. MatK subfamily.

It is found in the plastid. The protein resides in the chloroplast. Usually encoded in the trnK tRNA gene intron. Probably assists in splicing its own and other chloroplast group II introns. In Humulus lupulus (European hop), this protein is Maturase K.